The primary structure comprises 189 residues: Tumor protein p53-inducible protein 11 (189 aa).

Residues 1–63 (MAGKQPPPLM…FAVREPLGLR (63 aa)) lie on the Cytoplasmic side of the membrane. A Phosphoserine modification is found at Ser-14. Residues 64–84 (VWQFLSAMLFSSVAIMALALP) form a helical membrane-spanning segment. The Extracellular segment spans residues 85 to 108 (DQLYDAVFDGAEVTSKTPIRLYGG). Residues 109-129 (ALLSISLIMWNALYTAEKVII) form a helical membrane-spanning segment. Residue Arg-130 is a topological domain, cytoplasmic. The chain crosses the membrane as a helical span at residues 131 to 151 (WTLLTEACYFGVQSLVVTATL). Over 152 to 155 (AETG) the chain is Extracellular. Residues 156–176 (LMSLGTVLLLASRLLFVIVSI) form a helical membrane-spanning segment. The Cytoplasmic portion of the chain corresponds to 177–189 (YYYYQVGRKPKKV).

It localises to the membrane. This chain is Tumor protein p53-inducible protein 11 (Trp53i11), found in Mus musculus (Mouse).